The chain runs to 131 residues: S-adenosylmethionine decarboxylase proenzyme (131 aa).

S64 functions as the Schiff-base intermediate with substrate; via pyruvic acid in the catalytic mechanism. S64 bears the Pyruvic acid (Ser); by autocatalysis mark. H69 serves as the catalytic Proton acceptor; for processing activity. Residue C84 is the Proton donor; for catalytic activity of the active site.

Belongs to the prokaryotic AdoMetDC family. Type 1 subfamily. As to quaternary structure, heterotetramer of two alpha and two beta chains arranged as a dimer of alpha/beta heterodimers. It depends on pyruvate as a cofactor. In terms of processing, is synthesized initially as an inactive proenzyme. Formation of the active enzyme involves a self-maturation process in which the active site pyruvoyl group is generated from an internal serine residue via an autocatalytic post-translational modification. Two non-identical subunits are generated from the proenzyme in this reaction, and the pyruvate is formed at the N-terminus of the alpha chain, which is derived from the carboxyl end of the proenzyme. The post-translation cleavage follows an unusual pathway, termed non-hydrolytic serinolysis, in which the side chain hydroxyl group of the serine supplies its oxygen atom to form the C-terminus of the beta chain, while the remainder of the serine residue undergoes an oxidative deamination to produce ammonia and the pyruvoyl group blocking the N-terminus of the alpha chain.

The enzyme catalyses S-adenosyl-L-methionine + H(+) = S-adenosyl 3-(methylsulfanyl)propylamine + CO2. It functions in the pathway amine and polyamine biosynthesis; S-adenosylmethioninamine biosynthesis; S-adenosylmethioninamine from S-adenosyl-L-methionine: step 1/1. Functionally, catalyzes the decarboxylation of S-adenosylmethionine to S-adenosylmethioninamine (dcAdoMet), the propylamine donor required for the synthesis of the polyamines spermine and spermidine from the diamine putrescine. In Thermoplasma acidophilum (strain ATCC 25905 / DSM 1728 / JCM 9062 / NBRC 15155 / AMRC-C165), this protein is S-adenosylmethionine decarboxylase proenzyme.